A 172-amino-acid chain; its full sequence is uncharacterized protein (172 aa).

Disordered stretches follow at residues 1-54 and 82-111; these read MPRR…GGSS and ITGGFSGSGSNNAPADTSVPQSSYSNSVPE. Residues 14–29 show a composition bias toward low complexity; sequence AAPARSASTAAALPPR. The span at 30-47 shows a compositional bias: pro residues; it reads TMAPPPAPSRVQQAPPPT. Positions 89-109 are enriched in polar residues; it reads SGSNNAPADTSVPQSSYSNSV.

This is an uncharacterized protein from Schizosaccharomyces pombe (strain 972 / ATCC 24843) (Fission yeast).